The chain runs to 435 residues: Cytochrome c biogenesis protein Ccs1 (435 aa).

3 consecutive transmembrane segments (helical) span residues 17-37, 77-97, and 163-183; these read LSLS…GTII, NPCF…CTFS, and IAPI…LISL.

The protein belongs to the Ccs1/CcsB family. As to quaternary structure, may interact with CcsA.

It is found in the plastid. It localises to the chloroplast thylakoid membrane. In terms of biological role, required during biogenesis of c-type cytochromes (cytochrome c6 and cytochrome f) at the step of heme attachment. The sequence is that of Cytochrome c biogenesis protein Ccs1 from Gracilaria tenuistipitata var. liui (Red alga).